The sequence spans 348 residues: Inactive rhomboid-related protein 2 (348 aa).

The region spanning 14–49 (IEASSWIRIFRAFDTDHDGLIQCEEMQKTIRDSTYS) is the EF-hand domain. 4 residues coordinate Ca(2+): D27, D29, D31, and E38. Transmembrane regions (helical) follow at residues 121 to 141 (PPIF…YYVV), 177 to 197 (LINV…AIGV), 207 to 227 (IYIL…ALDP), 229 to 249 (VFLC…ITTI), 263 to 283 (LPIL…QRFF), 290 to 310 (VSMY…FILF), and 323 to 343 (FWVS…LIAA).

Belongs to the peptidase S54 family.

Its subcellular location is the membrane. Probable inactive serine protease. In Caenorhabditis elegans, this protein is Inactive rhomboid-related protein 2.